Reading from the N-terminus, the 672-residue chain is Rho GTPase-activating protein 40 (672 aa).

The disordered stretch occupies residues 43–68 (GCSPGLSTGPTNLQQHPQKPRPADCS). Residues 47–59 (GLSTGPTNLQQHP) show a composition bias toward polar residues. The Rho-GAP domain occupies 321 to 519 (VPLHSLLEAD…MMVQYQDLLW (199 aa)).

In terms of biological role, GTPase activator for the Rho-type GTPases by converting them to an inactive GDP-bound state. The chain is Rho GTPase-activating protein 40 from Mus musculus (Mouse).